The sequence spans 154 residues: Ribosomal RNA large subunit methyltransferase H (154 aa).

Glycine 102 contributes to the S-adenosyl-L-methionine binding site.

Belongs to the RNA methyltransferase RlmH family. In terms of assembly, homodimer.

It is found in the cytoplasm. The catalysed reaction is pseudouridine(1915) in 23S rRNA + S-adenosyl-L-methionine = N(3)-methylpseudouridine(1915) in 23S rRNA + S-adenosyl-L-homocysteine + H(+). Functionally, specifically methylates the pseudouridine at position 1915 (m3Psi1915) in 23S rRNA. In Caulobacter sp. (strain K31), this protein is Ribosomal RNA large subunit methyltransferase H.